Consider the following 269-residue polypeptide: 3'(2'),5'-bisphosphate nucleotidase CysQ (269 aa).

Mg(2+) contacts are provided by Glu69, Asp89, Leu91, Asp92, and Asp216. A substrate-binding site is contributed by Glu69. Substrate-binding positions include 91–94 and Asp216; that span reads LDGT.

The protein belongs to the inositol monophosphatase superfamily. CysQ family. Requires Mg(2+) as cofactor.

It localises to the cell inner membrane. It catalyses the reaction adenosine 3',5'-bisphosphate + H2O = AMP + phosphate. Functionally, converts adenosine-3',5'-bisphosphate (PAP) to AMP. The polypeptide is 3'(2'),5'-bisphosphate nucleotidase CysQ (Aggregatibacter actinomycetemcomitans (Actinobacillus actinomycetemcomitans)).